A 458-amino-acid polypeptide reads, in one-letter code: Ammonium transporter Rh type B (458 aa).

Residues 1 to 11 (MTDAATNMRLK) lie on the Cytoplasmic side of the membrane. A helical membrane pass occupies residues 12–32 (LPITCFILEIILIILFGTLVQ). Residues 33–58 (YDYETDAKEWHNTSHQDYENDFYFRY) lie on the Extracellular side of the membrane. N-linked (GlcNAc...) asparagine glycosylation occurs at Asn44. The helical transmembrane segment at 59–79 (PSFQDVHVMIFVGFGFLMTFL) threads the bilayer. At 80–83 (QRYG) the chain is on the cytoplasmic side. The chain crosses the membrane as a helical span at residues 84 to 104 (FGSVGFNFLIAAFSLQWATLM). Over 105–121 (QGFFHGMHGGKIHIGVE) the chain is Extracellular. A helical membrane pass occupies residues 122-142 (SMINADFCTGSVLISFGAVLG). Topologically, residues 143 to 151 (KTSPIQLLT) are cytoplasmic. A helical transmembrane segment spans residues 152–172 (MAIFEVTLFAVNEFILLSLLG). Residues 173-176 (TKDA) are Extracellular-facing. Residues 177–197 (GGSMTIHTFGAYFGLMVTRIL) form a helical membrane-spanning segment. Residues 198-216 (YRPNLDKSKHRNSSVYHSD) lie on the Cytoplasmic side of the membrane. Residues 217–237 (LFAMIGTVYLWMFWPSFNSAI) traverse the membrane as a helical segment. At 238–247 (TAHGDDQHRT) the chain is on the extracellular side. A helical membrane pass occupies residues 248 to 270 (ALNTYYSLAACTLATYGMSAITS). At 271-274 (HDGK) the chain is on the cytoplasmic side. Residues 275 to 295 (LDMVHIQNAALAGGVAVGTAG) traverse the membrane as a helical segment. Topologically, residues 296 to 298 (EMM) are extracellular. Residues 299-319 (LTPFGSMIVGFMAGIISVLGF) form a helical membrane-spanning segment. Over 320–340 (KFLSPILEDKLKIQDTCGIHN) the chain is Cytoplasmic. Residues 341 to 361 (LHGMPGVLGAIVGAVTAALAT) traverse the membrane as a helical segment. Over 362–391 (TDVYGQGMADVFPAVADGSVNATKQGGIQA) the chain is Extracellular. Residues 392–412 (LSLAITLGIAVLGGLIVGFVL) form a helical membrane-spanning segment. Over 413-458 (KLPVFGTPPDTLCFEDSVYWEVPGSESPEEGELTSVKPEETEHLNS) the chain is Cytoplasmic. Residues 436–458 (GSESPEEGELTSVKPEETEHLNS) are disordered. Residues 449-458 (KPEETEHLNS) are compositionally biased toward basic and acidic residues.

It belongs to the ammonium transporter (TC 2.A.49) family. Rh subfamily. In terms of tissue distribution, specifically expressed in the gill by pavement cells (at protein level).

The protein localises to the apicolateral cell membrane. The protein resides in the cytoplasmic vesicle membrane. In terms of biological role, functions as an ammonia transporter. May play a role in the elimination of ammonia in the gill. The polypeptide is Ammonium transporter Rh type B (rhbg) (Takifugu rubripes (Japanese pufferfish)).